A 218-amino-acid polypeptide reads, in one-letter code: Eukaryotic translation initiation factor 3 subunit K (218 aa).

In terms of domain architecture, PCI spans Y44–K205.

This sequence belongs to the eIF-3 subunit K family. In terms of assembly, component of the eukaryotic translation initiation factor 3 (eIF-3) complex.

It localises to the cytoplasm. Functionally, component of the eukaryotic translation initiation factor 3 (eIF-3) complex, which is involved in protein synthesis of a specialized repertoire of mRNAs and, together with other initiation factors, stimulates binding of mRNA and methionyl-tRNAi to the 40S ribosome. The eIF-3 complex specifically targets and initiates translation of a subset of mRNAs involved in cell proliferation. This chain is Eukaryotic translation initiation factor 3 subunit K, found in Bombyx mori (Silk moth).